Reading from the N-terminus, the 176-residue chain is Large ribosomal subunit protein eL20 (176 aa).

Lys-11 participates in a covalent cross-link: Glycyl lysine isopeptide (Lys-Gly) (interchain with G-Cter in SUMO2). Residue Tyr-63 is modified to Phosphotyrosine. Ser-71 carries the post-translational modification Phosphoserine. Lys-76 bears the N6-succinyllysine mark. The residue at position 123 (Ser-123) is a Phosphoserine. Residues Lys-128 and Lys-170 each participate in a glycyl lysine isopeptide (Lys-Gly) (interchain with G-Cter in SUMO2) cross-link.

It belongs to the eukaryotic ribosomal protein eL20 family. In terms of assembly, component of the large ribosomal subunit. Binds IPO9 with high affinity.

It is found in the cytoplasm. Its function is as follows. Component of the large ribosomal subunit. The ribosome is a large ribonucleoprotein complex responsible for the synthesis of proteins in the cell. The sequence is that of Large ribosomal subunit protein eL20 (RPL18A) from Bos taurus (Bovine).